The sequence spans 50 residues: Protein PsbN (50 aa).

A helical transmembrane segment spans residues 14–34; the sequence is IAVTILAILLALTGFGLWSAF.

Belongs to the PsbN family.

It localises to the cellular thylakoid membrane. May play a role in photosystem I and II biogenesis. In Prochlorococcus marinus (strain MIT 9215), this protein is Protein PsbN.